Here is a 352-residue protein sequence, read N- to C-terminus: Dysbindin (352 aa).

Ser11 bears the Phosphoserine mark. A coiled-coil region spans residues 92-180; that stretch reads TSLAELQEQL…AELDTEHAQK (89 aa). Residues 243-256 carry the Nuclear export signal motif; sequence LMDLSDQEALDVFL. Residues 267–352 are disordered; sequence SPGLEMESNP…SDQCDSTQDI (86 aa). A compositionally biased stretch (polar residues) spans 274–285; the sequence is SNPSQNEMNLQI. Positions 286–301 are enriched in low complexity; it reads PNPSESASQPPASPSA. 2 positions are modified to phosphoserine: Ser340 and Ser343.

Belongs to the dysbindin family. As to quaternary structure, interacts (via its coiled coil domain) with KXD1. Interacts with AP3B2, TRIM32, CMYA5, PI4K2 and RNF151. Interacts with the DNA-dependent protein kinase complex DNA-PK; the interaction phosphorylates DTNBP1 in vitro. Interacts directly in this complex with XRCC5 and XRCC6. Interacts with XPO1; the interaction exports DTNBP1 out of the nucleus. Component of the biogenesis of lysosome-related organelles complex 1 (BLOC-1) composed of at least BLOC1S1, BLOC1S2, BLOC1S3, BLOC1S4, BLOC1S5, BLOC1S6, DTNBP1/BLOC1S7 and SNAPIN/BLOC1S8. Interacts directly in the complex with BLOC1S5, BLOC1S6 and SNAPIN/BLOC1S8. The BLOC-1 complex associates with the AP-3 protein complex and membrane protein cargos. This BLOC-1 complex also associates with the BLOC-2 complex in endosomes. Binds to DTNA and DTNB but may not be a physiological binding partner. Interacts with AP3M1. Post-translationally, ubiquitinated by TRIM32. Ubiquitination leads to DTNBP1 degradation. In terms of tissue distribution, detected in hippocampus neurons (at protein level). Ubiquitously expressed. The highest expression is observed in testis, liver, kidney, brain, heart and lung. In the brain, found primarily in axon bundles and axon terminals, notably in the cerebellum and hippocampus. Expressed at lower levels in stomach, small intestine and skeletal muscle, where it is detected at the sarcolemma.

It localises to the cytoplasm. The protein resides in the cytoplasmic vesicle membrane. It is found in the cytoplasmic vesicle. The protein localises to the secretory vesicle. Its subcellular location is the synaptic vesicle membrane. It localises to the endosome membrane. The protein resides in the melanosome membrane. It is found in the nucleus. The protein localises to the postsynaptic density. Its subcellular location is the presynaptic cell membrane. It localises to the endoplasmic reticulum. Component of the BLOC-1 complex, a complex that is required for normal biogenesis of lysosome-related organelles (LRO), such as platelet dense granules and melanosomes. In concert with the AP-3 complex, the BLOC-1 complex is required to target membrane protein cargos into vesicles assembled at cell bodies for delivery into neurites and nerve terminals. The BLOC-1 complex, in association with SNARE proteins, is also proposed to be involved in neurite extension. Associates with the BLOC-2 complex to facilitate the transport of TYRP1 independent of AP-3 function. Plays a role in synaptic vesicle trafficking and in neurotransmitter release. Plays a role in the regulation of cell surface exposure of DRD2. May play a role in actin cytoskeleton reorganization and neurite outgrowth. May modulate MAPK8 phosphorylation. Appears to promote neuronal transmission and viability through regulating the expression of SNAP25 and SYN1, modulating PI3-kinase-Akt signaling and influencing glutamatergic release. Regulates the expression of SYN1 through binding to its promoter. Modulates prefrontal cortical activity via the dopamine/D2 pathway. The polypeptide is Dysbindin (Dtnbp1) (Rattus norvegicus (Rat)).